Reading from the N-terminus, the 90-residue chain is Small ribosomal subunit protein uS15 (90 aa).

Belongs to the universal ribosomal protein uS15 family. Part of the 30S ribosomal subunit. Forms a bridge to the 50S subunit in the 70S ribosome, contacting the 23S rRNA.

Its function is as follows. One of the primary rRNA binding proteins, it binds directly to 16S rRNA where it helps nucleate assembly of the platform of the 30S subunit by binding and bridging several RNA helices of the 16S rRNA. In terms of biological role, forms an intersubunit bridge (bridge B4) with the 23S rRNA of the 50S subunit in the ribosome. This chain is Small ribosomal subunit protein uS15, found in Tropheryma whipplei (strain TW08/27) (Whipple's bacillus).